Here is a 338-residue protein sequence, read N- to C-terminus: Mitochondrial glutathione transporter SLC25A40 (338 aa).

Solcar repeat units lie at residues 13–131 (VTPL…LTAL), 139–223 (NESR…LKKW), and 233–327 (PTFM…GKSF). A run of 6 helical transmembrane segments spans residues 19–39 (MFAS…FDVV), 103–123 (LWSG…IYFT), 145–165 (IVAG…LELI), 199–220 (WAPT…YEVL), 239–259 (FTSG…FDVV), and 298–318 (GLFT…AVMI).

It belongs to the mitochondrial carrier (TC 2.A.29) family.

Its subcellular location is the mitochondrion inner membrane. It carries out the reaction glutathione(in) = glutathione(out). Probable mitochondrial transporter required for glutathione import into mitochondria. Glutathione, which plays key roles in oxidative metabolism, is produced exclusively in the cytosol and is imported in many organelles. Mitochondrial glutathione is required for the activity and stability of proteins containing iron-sulfur clusters, as well as erythropoiesis. The chain is Mitochondrial glutathione transporter SLC25A40 from Bos taurus (Bovine).